The following is a 125-amino-acid chain: Small ribosomal subunit protein uS12m (125 aa).

Disordered stretches follow at residues 1-50 (MPTL…SAPR) and 106-125 (GIPN…PKSI). Over residues 10–23 (HGREEKRRTDRTRA) the composition is skewed to basic and acidic residues.

It belongs to the universal ribosomal protein uS12 family.

Its subcellular location is the mitochondrion. In terms of biological role, protein S12 is involved in the translation initiation step. The sequence is that of Small ribosomal subunit protein uS12m (RPS12) from Magnolia soulangeana (Saucer magnolia).